The chain runs to 331 residues: dTDP-glucose 4,6-dehydratase (331 aa).

NAD(+) contacts are provided by residues 11 to 12 (FI), 33 to 36 (DALT), 57 to 58 (DI), 77 to 81 (FAAES), and Thr96. Ser81 provides a ligand contact to substrate. Thr120 lines the substrate pocket. The active-site Proton donor is the Asp121. Catalysis depends on proton acceptor residues Glu122 and Tyr147. Residue 147 to 151 (YSATK) participates in NAD(+) binding. Residue Asn176 coordinates substrate. Asn177 contributes to the NAD(+) binding site. Substrate is bound by residues 186-191 (KFIPRQ), 202-204 (KLY), Arg211, Asn246, and 269-273 (DRVGH).

Belongs to the NAD(P)-dependent epimerase/dehydratase family. dTDP-glucose dehydratase subfamily. As to quaternary structure, homodimer. It depends on NAD(+) as a cofactor.

The enzyme catalyses dTDP-alpha-D-glucose = dTDP-4-dehydro-6-deoxy-alpha-D-glucose + H2O. It functions in the pathway carbohydrate biosynthesis; dTDP-L-rhamnose biosynthesis. Catalyzes the dehydration of dTDP-D-glucose to form dTDP-6-deoxy-D-xylo-4-hexulose via a three-step process involving oxidation, dehydration and reduction. Involved in the biosynthesis of the dTDP-L-rhamnose which is a component of the critical linker, D-N-acetylglucosamine-L-rhamnose disaccharide, which connects the galactan region of arabinogalactan to peptidoglycan via a phosphodiester linkage. This is dTDP-glucose 4,6-dehydratase (rmlB) from Mycobacterium tuberculosis (strain CDC 1551 / Oshkosh).